Here is a 689-residue protein sequence, read N- to C-terminus: Glycine--tRNA ligase beta subunit (689 aa).

This sequence belongs to the class-II aminoacyl-tRNA synthetase family. In terms of assembly, tetramer of two alpha and two beta subunits.

The protein resides in the cytoplasm. The catalysed reaction is tRNA(Gly) + glycine + ATP = glycyl-tRNA(Gly) + AMP + diphosphate. This chain is Glycine--tRNA ligase beta subunit, found in Serratia proteamaculans (strain 568).